We begin with the raw amino-acid sequence, 179 residues long: ATP-dependent protease subunit HslV (179 aa).

Threonine 6 is an active-site residue. Serine 162, cysteine 165, and threonine 168 together coordinate Na(+).

This sequence belongs to the peptidase T1B family. HslV subfamily. A double ring-shaped homohexamer of HslV is capped on each side by a ring-shaped HslU homohexamer. The assembly of the HslU/HslV complex is dependent on binding of ATP.

The protein resides in the cytoplasm. It carries out the reaction ATP-dependent cleavage of peptide bonds with broad specificity.. Allosterically activated by HslU binding. Its function is as follows. Protease subunit of a proteasome-like degradation complex believed to be a general protein degrading machinery. This chain is ATP-dependent protease subunit HslV, found in Maridesulfovibrio salexigens (strain ATCC 14822 / DSM 2638 / NCIMB 8403 / VKM B-1763) (Desulfovibrio salexigens).